The chain runs to 155 residues: SsrA-binding protein (155 aa).

This sequence belongs to the SmpB family.

The protein resides in the cytoplasm. Required for rescue of stalled ribosomes mediated by trans-translation. Binds to transfer-messenger RNA (tmRNA), required for stable association of tmRNA with ribosomes. tmRNA and SmpB together mimic tRNA shape, replacing the anticodon stem-loop with SmpB. tmRNA is encoded by the ssrA gene; the 2 termini fold to resemble tRNA(Ala) and it encodes a 'tag peptide', a short internal open reading frame. During trans-translation Ala-aminoacylated tmRNA acts like a tRNA, entering the A-site of stalled ribosomes, displacing the stalled mRNA. The ribosome then switches to translate the ORF on the tmRNA; the nascent peptide is terminated with the 'tag peptide' encoded by the tmRNA and targeted for degradation. The ribosome is freed to recommence translation, which seems to be the essential function of trans-translation. The protein is SsrA-binding protein of Bacillus cereus (strain 03BB102).